A 1199-amino-acid polypeptide reads, in one-letter code: DNA-directed RNA polymerase subunit beta (1199 aa).

The tract at residues 1175-1199 (EEKKAHEAAAQATDGKSANSTDDKK) is disordered. Residues 1188-1199 (DGKSANSTDDKK) show a composition bias toward polar residues.

The protein belongs to the RNA polymerase beta chain family. In terms of assembly, the RNAP catalytic core consists of 2 alpha, 1 beta, 1 beta' and 1 omega subunit. When a sigma factor is associated with the core the holoenzyme is formed, which can initiate transcription.

It catalyses the reaction RNA(n) + a ribonucleoside 5'-triphosphate = RNA(n+1) + diphosphate. Its function is as follows. DNA-dependent RNA polymerase catalyzes the transcription of DNA into RNA using the four ribonucleoside triphosphates as substrates. The polypeptide is DNA-directed RNA polymerase subunit beta (Lacticaseibacillus casei (strain BL23) (Lactobacillus casei)).